The following is a 267-amino-acid chain: 14-3-3-like protein GF14 chi (267 aa).

The residue at position 2 (Ala-2) is an N-acetylalanine. Phosphoserine is present on residues Ser-72 and Ser-195. Residue Thr-216 is modified to Phosphothreonine. Phosphoserine is present on Ser-267.

It belongs to the 14-3-3 family. As to quaternary structure, interacts with TPK1. Interacts with the isocitrate dehydrogenase IDH3, and malate dehydrogenases MDH1 and MDH2. Interacts with DREB1A and DREB1B in the nucleus. Interacts with CINV1.

It is found in the nucleus. It localises to the cytoplasm. Is associated with a DNA binding complex that binds to the G box, a well-characterized cis-acting DNA regulatory element found in plant genes. Involved in the regulation of nutrient metabolism. This is 14-3-3-like protein GF14 chi (GRF1) from Arabidopsis thaliana (Mouse-ear cress).